Here is a 661-residue protein sequence, read N- to C-terminus: Chermesin D/asnovolin J monooxidase nvfH (661 aa).

An N-linked (GlcNAc...) asparagine glycan is attached at Asn12. The helical transmembrane segment at 89–111 threads the bilayer; the sequence is VLIIGAGYGGLLFAVRIIQTGAF. FAD contacts are provided by residues 128-131, 140-141, and Tyr146; these read TWYW and DV. 138-140 is an NADP(+) binding site; that stretch reads MCD. NADP(+)-binding positions include 286–292 and 309–310; these read TGATAIQ and RT. Asn382 and Asn538 each carry an N-linked (GlcNAc...) asparagine glycan.

This sequence belongs to the FAD-binding monooxygenase family. Requires FAD as cofactor.

The protein resides in the membrane. The catalysed reaction is chermesin D + AH2 + O2 = asnovolin I + A + H2O. It catalyses the reaction asnovolin J + AH2 + O2 = asnovolin A + A + H2O. It functions in the pathway secondary metabolite biosynthesis; terpenoid biosynthesis. Functionally, chermesin D/asnovolin J monooxidase; part of the gene cluster that mediates the biosynthesis of novofumigatonin, a heavily oxygenated meroterpenoid containing a unique orthoester moiety. The first step of the pathway is the synthesis of 3,5-dimethylorsellinic acid (DMOA) by the polyketide synthase nvfA via condensation of one acetyl-CoA starter unit with 3 malonyl-CoA units and 2 methylations. DMOA is then converted to farnesyl-DMOA by the farnesyltransferase nvfB. Epoxydation by FAD-dependent monooxygenase nvfK, followed by a protonation-initiated cyclization catalyzed by the terpene cyclase nvfL leads to the production of asnavolin H. The short chain dehydrogenase nvfC then as a 3-OH dehydrogenase of asnovolin H to yield chemesin D. There are two branches to synthesize asnovolin A from chemesin D. In one branch, chemesin D undergoes Baeyer-Villiger oxidation by nvfH, methylation by nvfJ, and enoyl reduction by the nvfM D enoylreductase that reduces the double bond between C-5'and C-6', to form respectively asnovolin I, asnovolin K, and asnovolin A. In the other branch, the methylation precedes the Baeyer-Villiger oxidation and the enoyl reduction to yield asnovolin A via the asnovolin J intermediate. Asnovolin A is further converted to fumigatonoid A by the Fe(II)/2-oxoglutarate-dependent dioxygenase nvfI that catalyzes an endoperoxidation reaction. The alpha/beta hydrolase nvfD then acts as an epimerase that converts fumigatonoid A to its C-5' epimer, which then undergoes spontaneous or nvfD-catalyzed lactonization. The following step utilizes the ketoreductase nvfG to produce fumigatonoid B. The dioxygenase nvfE further converts fumigatonoid B into fumigatonoid C. Finally the Fe(II)/2-oxoglutarate-dependent dioxygenase nvfF catalyzes two rounds of oxidation to transform fumigatonoid C into the end product, novofumigatonin A. The protein is Chermesin D/asnovolin J monooxidase nvfH of Aspergillus novofumigatus (strain IBT 16806).